The sequence spans 240 residues: Protein unc-119 homolog A (240 aa).

The span at 1 to 12 (MKVKKGGGGTGS) shows a compositional bias: gly residues. Residues 1–62 (MKVKKGGGGT…PLQGKQPIGP (62 aa)) are disordered. Phosphoserine; by CK2 occurs at positions 37, 39, and 41. Y131 is a binding site for tetradecanoate.

It belongs to the PDE6D/unc-119 family. May interact with GTP-bound ARL1. Interacts with ARL2 and ARL3 (GTP-bound forms); this promotes the release of myristoylated cargo proteins. Found in a complex with ARL3, RP2 and UNC119; RP2 induces hydrolysis of GTP ARL3 in the complex, leading to the release of UNC119. Interacts with NPHP3 (when myristoylated). Interacts with CYS1 (when myristoylated). Interacts with MACIR; interaction only takes place when UNC119 is not liganded with myristoylated proteins. Interacts with CABP4; in the absence of calcium. Interacts with DNM1; leading to a decrease of DNM1 GTPase activity. Interacts with LCK; this interaction plays a crucial role in activation of LCK. Interacts with FYN. Interacts with RAB11A; in a cell cycle-dependent manner. Interacts with LYN (via SH2 and SH3 domains); leading to LYN activation. Found in a complex with ABL1, ABL2, CRK and UNC119; leading to the inhibition of CRK phosphorylation by ABL kinases. Interacts with CD44. Interacts with KLHL18 (via kelch repeats). Interacts with PPP3CA, PPP3CB and PPP3CC. Interacts with USP48; this interaction promotes UNC119 stability. In terms of processing, phosphorylation suppresses its interaction with KLHL18 and down-regulates its KLHL18-mediated degradation. Phosphorylated more under light conditions than dark conditions. Dephosphorylated by calcineurin. In terms of tissue distribution, localized in photoreceptor synapses in the outer plexiform layer of the retina.

Its subcellular location is the cytoplasm. The protein localises to the cytoskeleton. The protein resides in the microtubule organizing center. It localises to the centrosome. It is found in the spindle. Its subcellular location is the spindle pole. Involved in synaptic functions in photoreceptor cells, the signal transduction in immune cells as a Src family kinase activator, endosome recycling, the uptake of bacteria and endocytosis, protein trafficking in sensory neurons and as lipid-binding chaperone with specificity for a diverse subset of myristoylated proteins. Specifically binds the myristoyl moiety of a subset of N-terminally myristoylated proteins and is required for their localization. Binds myristoylated GNAT1 and is required for G-protein localization and trafficking in sensory neurons. Probably plays a role in trafficking proteins in photoreceptor cells. Plays important roles in mediating Src family kinase signals for the completion of cytokinesis via RAB11A. The polypeptide is Protein unc-119 homolog A (Unc119) (Mus musculus (Mouse)).